The primary structure comprises 211 residues: tRNA (pseudouridine(54)-N(1))-methyltransferase (211 aa).

S-adenosyl-L-methionine contacts are provided by leucine 128, glycine 150, and cysteine 183.

Belongs to the methyltransferase superfamily. TrmY family. As to quaternary structure, homodimer.

The protein resides in the cytoplasm. The catalysed reaction is pseudouridine(54) in tRNA + S-adenosyl-L-methionine = N(1)-methylpseudouridine(54) in tRNA + S-adenosyl-L-homocysteine + H(+). Functionally, specifically catalyzes the N1-methylation of pseudouridine at position 54 (Psi54) in tRNAs. In Methanosarcina acetivorans (strain ATCC 35395 / DSM 2834 / JCM 12185 / C2A), this protein is tRNA (pseudouridine(54)-N(1))-methyltransferase.